The sequence spans 468 residues: Flavin-containing monooxygenase FMO GS-OX-like 1 (468 aa).

Gly16–Gly21 contributes to the FAD binding site. An NADP(+)-binding site is contributed by Gly211–Gly216.

The protein belongs to the FMO family. Requires FAD as cofactor.

Its function is as follows. Catalyzes the conversion of methylthioalkyl glucosinolates of any chain length into methylsulfinylalkyl glucosinolates. In Arabidopsis thaliana (Mouse-ear cress), this protein is Flavin-containing monooxygenase FMO GS-OX-like 1.